The sequence spans 347 residues: Heat-inducible transcription repressor HrcA (347 aa).

It belongs to the HrcA family.

In terms of biological role, negative regulator of class I heat shock genes (grpE-dnaK-dnaJ and groELS operons). Prevents heat-shock induction of these operons. In Nocardia farcinica (strain IFM 10152), this protein is Heat-inducible transcription repressor HrcA.